The chain runs to 440 residues: MTNITQNQKITVVGAGLAGSECALQLADMGYSVVLYEMRDKTMTPAHKTHKFAELVCSNSFGSLGEHSAPGQLKWEAKKLNSHILQAAFEAQVPAGQALGMDREVFSAIMTEKVKNHPNIEIRNDVVKSLNDIPRPAVIATGPLTHDDLAESMRQHFGDEFLYFFDAIAPIIDADSINTEIAWKADRYDKGTGDYYNCPMNKEEYNRFIEEIQKARKIEPKDFETTDFFEGCMPIEVMVDRGPQTLRFGPMKPIGLDDPRTGRYPWAVVQLRQDNKEGTAYNMVGFQTRMAYGEQVRVFRMIPGLENAEFLKLGSIHRNLFINSPKRLNKDLSSKNDPWLFFAGQITGVEGYFESTCTGLMVSRFLNQKLKDQPFNPPPRESAFGSLLEAITDPTRAEHFQPTNINFALLPPLAEKERDKTLRKEKQIAIARNVMEQWNP.

An FAD-binding site is contributed by 14 to 19 (GAGLAG).

This sequence belongs to the MnmG family. TrmFO subfamily. FAD is required as a cofactor.

It is found in the cytoplasm. The enzyme catalyses uridine(54) in tRNA + (6R)-5,10-methylene-5,6,7,8-tetrahydrofolate + NADH + H(+) = 5-methyluridine(54) in tRNA + (6S)-5,6,7,8-tetrahydrofolate + NAD(+). The catalysed reaction is uridine(54) in tRNA + (6R)-5,10-methylene-5,6,7,8-tetrahydrofolate + NADPH + H(+) = 5-methyluridine(54) in tRNA + (6S)-5,6,7,8-tetrahydrofolate + NADP(+). Catalyzes the folate-dependent formation of 5-methyl-uridine at position 54 (M-5-U54) in all tRNAs. This chain is Methylenetetrahydrofolate--tRNA-(uracil-5-)-methyltransferase TrmFO, found in Bdellovibrio bacteriovorus (strain ATCC 15356 / DSM 50701 / NCIMB 9529 / HD100).